Consider the following 262-residue polypeptide: 3-deoxy-manno-octulosonate cytidylyltransferase (262 aa).

The protein belongs to the KdsB family.

The protein resides in the cytoplasm. The catalysed reaction is 3-deoxy-alpha-D-manno-oct-2-ulosonate + CTP = CMP-3-deoxy-beta-D-manno-octulosonate + diphosphate. It participates in nucleotide-sugar biosynthesis; CMP-3-deoxy-D-manno-octulosonate biosynthesis; CMP-3-deoxy-D-manno-octulosonate from 3-deoxy-D-manno-octulosonate and CTP: step 1/1. It functions in the pathway bacterial outer membrane biogenesis; lipopolysaccharide biosynthesis. Activates KDO (a required 8-carbon sugar) for incorporation into bacterial lipopolysaccharide in Gram-negative bacteria. The protein is 3-deoxy-manno-octulosonate cytidylyltransferase of Koribacter versatilis (strain Ellin345).